Here is a 221-residue protein sequence, read N- to C-terminus: MKRFLILTPMVLALCGCESPALLVQKDDAEFAPPANLVQPATVTEGGGLFQPAYNWSLLQDRRAYRIGDILTVILDESTQSSKQAKTNFGKKNDMSLGVPEVLGKKLNKFGGSISGKRDFDGSATSAQQNMLRGSITVAVHQVLPNGVLVIRGEKWLTLNQGDEYMRVTGLVRADDVARDNSVSSQRIANARISYAGRGALSDANSAGWLTRFFNHPLFPI.

A signal peptide spans 1 to 16 (MKRFLILTPMVLALCG). Residue C17 is the site of N-palmitoyl cysteine attachment. The S-diacylglycerol cysteine moiety is linked to residue C17.

This sequence belongs to the FlgH family. The basal body constitutes a major portion of the flagellar organelle and consists of four rings (L,P,S, and M) mounted on a central rod.

It is found in the cell outer membrane. The protein localises to the bacterial flagellum basal body. In terms of biological role, assembles around the rod to form the L-ring and probably protects the motor/basal body from shearing forces during rotation. The protein is Flagellar L-ring protein 2 of Yersinia pseudotuberculosis serotype I (strain IP32953).